Reading from the N-terminus, the 103-residue chain is Large ribosomal subunit protein bL21 (103 aa).

Belongs to the bacterial ribosomal protein bL21 family. In terms of assembly, part of the 50S ribosomal subunit. Contacts protein L20.

In terms of biological role, this protein binds to 23S rRNA in the presence of protein L20. In Amoebophilus asiaticus (strain 5a2), this protein is Large ribosomal subunit protein bL21.